We begin with the raw amino-acid sequence, 270 residues long: Probable ribosome biogenesis GTPase A (270 aa).

In terms of domain architecture, CP-type G spans 20–174 (HDQLKKLSSQ…LSDTPGVFLK (155 aa)). GTP is bound by residues 126-131 (NVGKSS) and Gly170.

It belongs to the TRAFAC class YlqF/YawG GTPase family. MTG1 subfamily.

The protein resides in the cytoplasm. Functionally, required for a late step of 50S ribosomal subunit assembly. Has GTPase activity. Binds to the 23S rRNA. The chain is Probable ribosome biogenesis GTPase A (rbgA) from Mycoplasma genitalium (strain ATCC 33530 / DSM 19775 / NCTC 10195 / G37) (Mycoplasmoides genitalium).